The primary structure comprises 509 residues: ATP synthase subunit alpha (509 aa).

ATP is bound at residue 169–176 (GDRQTGKT).

This sequence belongs to the ATPase alpha/beta chains family. In terms of assembly, F-type ATPases have 2 components, CF(1) - the catalytic core - and CF(0) - the membrane proton channel. CF(1) has five subunits: alpha(3), beta(3), gamma(1), delta(1), epsilon(1). CF(0) has four main subunits: a(1), b(1), b'(1) and c(9-12).

It is found in the cell inner membrane. The enzyme catalyses ATP + H2O + 4 H(+)(in) = ADP + phosphate + 5 H(+)(out). Produces ATP from ADP in the presence of a proton gradient across the membrane. The alpha chain is a regulatory subunit. The protein is ATP synthase subunit alpha of Bradyrhizobium sp. (strain ORS 278).